Consider the following 230-residue polypeptide: MPGKPVNLASPNERKLNFWERLYLPAVVQGLAYTWRKMRSPRYTFQYPDELWYPPDSYRGRPVLVEENGRPRCVACGLCARACPPLAISMQAKEVDDVKEREPAWFEINMLRCIYCGYCEEVCPEEAIVMSKEYDLTFQSRDEAIFGLEKLLVPAERLKDRLEWLDRYKDPQYGQHWEFRKENNLHSLKDRPFLKWLLEEEGMEELKSTHLRPEEPVAAERSWGGVRAEG.

2 consecutive 4Fe-4S ferredoxin-type domains span residues 60–93 and 104–133; these read GRPVLVEENGRPRCVACGLCARACPPLAISMQAK and AWFEINMLRCIYCGYCEEVCPEEAIVMSKE. [4Fe-4S] cluster is bound by residues cysteine 73, cysteine 76, cysteine 79, cysteine 83, cysteine 113, cysteine 116, cysteine 119, and cysteine 123.

It belongs to the complex I 23 kDa subunit family. As to quaternary structure, NDH-1 is composed of 14 different subunits. Subunits Nqo7-14 constitute the membrane sector of the complex. The cofactor is [4Fe-4S] cluster.

The protein resides in the cell inner membrane. The catalysed reaction is a quinone + NADH + 5 H(+)(in) = a quinol + NAD(+) + 4 H(+)(out). Functionally, NDH-1 shuttles electrons from NADH, via FMN and iron-sulfur (Fe-S) centers, to quinones in the respiratory chain. The immediate electron acceptor for the enzyme in this species is believed to be menaquinone. Couples the redox reaction to proton translocation (for every two electrons transferred, four hydrogen ions are translocated across the cytoplasmic membrane), and thus conserves the redox energy in a proton gradient. This Rhodothermus marinus (Rhodothermus obamensis) protein is NADH-quinone oxidoreductase subunit 9 (nqo9).